The primary structure comprises 121 residues: Large ribosomal subunit protein uL18 (121 aa).

The protein belongs to the universal ribosomal protein uL18 family. In terms of assembly, part of the 50S ribosomal subunit; part of the 5S rRNA/L5/L18/L25 subcomplex. Contacts the 5S and 23S rRNAs.

In terms of biological role, this is one of the proteins that bind and probably mediate the attachment of the 5S RNA into the large ribosomal subunit, where it forms part of the central protuberance. The polypeptide is Large ribosomal subunit protein uL18 (Bdellovibrio bacteriovorus (strain ATCC 15356 / DSM 50701 / NCIMB 9529 / HD100)).